The primary structure comprises 342 residues: GTPase Obg (342 aa).

Positions 1–159 (MKFLDLCKVY…RTIWLRLKLI (159 aa)) constitute an Obg domain. Residues 160–327 (ADAGLLGLPN…VLRALWAEID (168 aa)) form the OBG-type G domain. Residues 166 to 173 (GLPNAGKS), 191 to 195 (FTTLV), 212 to 215 (DIPG), 279 to 282 (NKID), and 308 to 310 (SGV) contribute to the GTP site. Mg(2+) is bound by residues S173 and T193.

This sequence belongs to the TRAFAC class OBG-HflX-like GTPase superfamily. OBG GTPase family. As to quaternary structure, monomer. The cofactor is Mg(2+).

It is found in the cytoplasm. Its function is as follows. An essential GTPase which binds GTP, GDP and possibly (p)ppGpp with moderate affinity, with high nucleotide exchange rates and a fairly low GTP hydrolysis rate. Plays a role in control of the cell cycle, stress response, ribosome biogenesis and in those bacteria that undergo differentiation, in morphogenesis control. The chain is GTPase Obg from Cereibacter sphaeroides (strain KD131 / KCTC 12085) (Rhodobacter sphaeroides).